The sequence spans 491 residues: Cytochrome P450 2F2 (491 aa).

A heme-binding site is contributed by C436.

Belongs to the cytochrome P450 family. The cofactor is heme. In terms of tissue distribution, club cells in lung and liver.

It localises to the endoplasmic reticulum membrane. The protein resides in the microsome membrane. Its function is as follows. Involved in the regio- and stereoselective transformation of naphthalene to trans-1R-hydroxy-2R-glutathionyl-1,2-dihydronaphthalene in the presence of glutathione and glutathione S-transferases. It specifically catalyzes the production of a very reactive and potentially toxic intermediate, the 2R,2S arene oxide, that is associated with necrosis of the unciliated bronchiolar epithelial cells or club cells in lung. In Mus musculus (Mouse), this protein is Cytochrome P450 2F2 (Cyp2f2).